Consider the following 887-residue polypeptide: Endoglucanase 1 (887 aa).

A signal peptide spans 1-55 (MRLVNSLGRRKILLILAVIVAFSTVLLFAKLWGRKTSSTLDEVGSKTHGDLTAEN). The tract at residues 40 to 66 (LDEVGSKTHGDLTAENKNGGYLPEEEI) is disordered. Basic and acidic residues predominate over residues 43-53 (VGSKTHGDLTA). A catalytic region spans residues 56 to 518 (KNGGYLPEEE…AKMYKLYGGS (463 aa)). The Nucleophile role is filled by Asp-131. Residues 441–460 (ENPPKRPHHRTAHGSWADSQ) are disordered. Residues His-448, Asp-486, and Glu-495 contribute to the active site. In terms of domain architecture, CBM3 1 spans 529–684 (VPEDEIFVEA…GVLVFGREPG (156 aa)). Residues 684–730 (GSASKSTSKDNGLSKATPTVKTESQPTAKHTQNPASDFKTPANQNSV) are disordered. Over residues 686-729 (ASKSTSKDNGLSKATPTVKTESQPTAKHTQNPASDFKTPANQNS) the composition is skewed to polar residues. A CBM3 2 domain is found at 736 to 887 (IKGEVVLQYA…SNKLVYGKEP (152 aa)).

It belongs to the glycosyl hydrolase 9 (cellulase E) family.

The enzyme catalyses Endohydrolysis of (1-&gt;4)-beta-D-glucosidic linkages in cellulose, lichenin and cereal beta-D-glucans.. It participates in glycan metabolism; cellulose degradation. Its function is as follows. This enzyme catalyzes the endohydrolysis of 1,4-beta-glucosidic linkages in cellulose, lichenin and cereal beta-D-glucans. Principally active against barley beta-glucan. This is Endoglucanase 1 (celI) from Acetivibrio thermocellus (strain ATCC 27405 / DSM 1237 / JCM 9322 / NBRC 103400 / NCIMB 10682 / NRRL B-4536 / VPI 7372) (Clostridium thermocellum).